A 374-amino-acid polypeptide reads, in one-letter code: Queuine tRNA-ribosyltransferase (374 aa).

Residue Asp89 is the Proton acceptor of the active site. Substrate contacts are provided by residues 89–93, Asp143, Gln187, and Gly214; that span reads DSGGF. The interval 245 to 251 is RNA binding; sequence GVGKPED. Asp264 functions as the Nucleophile in the catalytic mechanism. The tract at residues 269–273 is RNA binding; important for wobble base 34 recognition; that stretch reads TRNAR. 4 residues coordinate Zn(2+): Cys302, Cys304, Cys307, and His333.

Belongs to the queuine tRNA-ribosyltransferase family. Homodimer. Within each dimer, one monomer is responsible for RNA recognition and catalysis, while the other monomer binds to the replacement base PreQ1. Zn(2+) is required as a cofactor.

The enzyme catalyses 7-aminomethyl-7-carbaguanine + guanosine(34) in tRNA = 7-aminomethyl-7-carbaguanosine(34) in tRNA + guanine. It functions in the pathway tRNA modification; tRNA-queuosine biosynthesis. Its function is as follows. Catalyzes the base-exchange of a guanine (G) residue with the queuine precursor 7-aminomethyl-7-deazaguanine (PreQ1) at position 34 (anticodon wobble position) in tRNAs with GU(N) anticodons (tRNA-Asp, -Asn, -His and -Tyr). Catalysis occurs through a double-displacement mechanism. The nucleophile active site attacks the C1' of nucleotide 34 to detach the guanine base from the RNA, forming a covalent enzyme-RNA intermediate. The proton acceptor active site deprotonates the incoming PreQ1, allowing a nucleophilic attack on the C1' of the ribose to form the product. After dissociation, two additional enzymatic reactions on the tRNA convert PreQ1 to queuine (Q), resulting in the hypermodified nucleoside queuosine (7-(((4,5-cis-dihydroxy-2-cyclopenten-1-yl)amino)methyl)-7-deazaguanosine). The protein is Queuine tRNA-ribosyltransferase of Shewanella oneidensis (strain ATCC 700550 / JCM 31522 / CIP 106686 / LMG 19005 / NCIMB 14063 / MR-1).